The following is an 883-amino-acid chain: Alanine--tRNA ligase (883 aa).

Residues His563, His567, Cys677, and His681 each contribute to the Zn(2+) site.

It belongs to the class-II aminoacyl-tRNA synthetase family. The cofactor is Zn(2+).

Its subcellular location is the cytoplasm. The enzyme catalyses tRNA(Ala) + L-alanine + ATP = L-alanyl-tRNA(Ala) + AMP + diphosphate. In terms of biological role, catalyzes the attachment of alanine to tRNA(Ala) in a two-step reaction: alanine is first activated by ATP to form Ala-AMP and then transferred to the acceptor end of tRNA(Ala). Also edits incorrectly charged Ser-tRNA(Ala) and Gly-tRNA(Ala) via its editing domain. This Cereibacter sphaeroides (strain ATCC 17025 / ATH 2.4.3) (Rhodobacter sphaeroides) protein is Alanine--tRNA ligase.